Here is a 567-residue protein sequence, read N- to C-terminus: MLVRGYVVSRKLFASILIGALLGIGAPPSAHAGADDVVDSSKSFVMENFSSYHGTKPGYVDSIQKGIQKPKSGTQGNYDDDWKGFYSTDNKYDAAGYSVDNENPLSGKAGGVVKVTYPGLTKVLALKVDNAETIKKELGLSLTEPLMEQVGTEEFIKRFGDGASRVVLSLPFAEGSSSVEYINNWEQAKALSVELEINFETRGKRGQDAMYEYMAQACAGNRVRRSVGSSLSCINLDWDVIRDKTKTKIESLKEHGPIKNKMSESPNKTVSEEKAKQYLEEFHQTALEHPELSELKTVTGTNPVFAGANYAAWAVNVAQVIDSETADNLEKTTAALSILPGIGSVMGIADGAVHHNTEEIVAQSIALSSLMVAQAIPLVGELVDIGFAAYNFVESIINLFQVVHNSYNRPAYSPGHKTQPFLHDGYAVSWNTVEDSIIRTGFQGESGHDIKITAENTPLPIAGVLLPTIPGKLDVNKSKTHISVNGRKIRMRCRAIDGDVTFCRPKSPVYVGNGVHANLHVAFHRSSSEKIHSNEISSDSIGVLGYQKTVDHTKVNSKLSLFFEIKS.

An N-terminal signal peptide occupies residues 1 to 32 (MLVRGYVVSRKLFASILIGALLGIGAPPSAHA). NAD(+) contacts are provided by His53 and Tyr97. The active site involves Glu180. Cystine bridges form between Cys218–Cys233 and Cys493–Cys503.

As to quaternary structure, homodimer. In terms of processing, proteolytic activation by host furin cleaves the protein in two parts, Diphtheria toxin fragment A and Diphtheria toxin fragment B; which remain associated via a disulfide bond.

The catalysed reaction is diphthamide-[translation elongation factor 2] + NAD(+) = N-(ADP-D-ribosyl)diphthamide-[translation elongation factor 2] + nicotinamide + H(+). Partially inhibited by 1,8-naphthalimide (NAP). In terms of biological role, diphtheria toxin, produced by a phage infecting Corynebacterium diphtheriae, is a proenzyme that, after activation, catalyzes the covalent attachment of the ADP ribose moiety of NAD to eukaryotic elongation factor 2 (eEF-2). Fragment A is the catalytic portion responsible for enzymatic ADP-ribosylation of elongation factor 2, while fragment B is responsible for binding of toxin to cell receptors and entry of fragment A. This chain is Diphtheria toxin, found in Corynebacterium diphtheriae.